We begin with the raw amino-acid sequence, 140 residues long: Nucleoside diphosphate kinase (140 aa).

The ATP site is built by K11, F59, R87, T93, R104, and N114. H117 (pros-phosphohistidine intermediate) is an active-site residue.

This sequence belongs to the NDK family. Homotetramer. The cofactor is Mg(2+).

Its subcellular location is the cytoplasm. It catalyses the reaction a 2'-deoxyribonucleoside 5'-diphosphate + ATP = a 2'-deoxyribonucleoside 5'-triphosphate + ADP. The catalysed reaction is a ribonucleoside 5'-diphosphate + ATP = a ribonucleoside 5'-triphosphate + ADP. Its function is as follows. Major role in the synthesis of nucleoside triphosphates other than ATP. The ATP gamma phosphate is transferred to the NDP beta phosphate via a ping-pong mechanism, using a phosphorylated active-site intermediate. This chain is Nucleoside diphosphate kinase, found in Bradyrhizobium diazoefficiens (strain JCM 10833 / BCRC 13528 / IAM 13628 / NBRC 14792 / USDA 110).